We begin with the raw amino-acid sequence, 657 residues long: tRNA 5-methylaminomethyl-2-thiouridine biosynthesis bifunctional protein MnmC (657 aa).

Positions 1–235 are tRNA (mnm(5)s(2)U34)-methyltransferase; sequence MSDAHNAQLD…KREMLAGPFQ (235 aa). An FAD-dependent cmnm(5)s(2)U34 oxidoreductase region spans residues 261–657; the sequence is IGAGLAGCAT…QLIRGTGSPT (397 aa).

In the N-terminal section; belongs to the methyltransferase superfamily. tRNA (mnm(5)s(2)U34)-methyltransferase family. This sequence in the C-terminal section; belongs to the DAO family. FAD serves as cofactor.

It localises to the cytoplasm. The enzyme catalyses 5-aminomethyl-2-thiouridine(34) in tRNA + S-adenosyl-L-methionine = 5-methylaminomethyl-2-thiouridine(34) in tRNA + S-adenosyl-L-homocysteine + H(+). Catalyzes the last two steps in the biosynthesis of 5-methylaminomethyl-2-thiouridine (mnm(5)s(2)U) at the wobble position (U34) in tRNA. Catalyzes the FAD-dependent demodification of cmnm(5)s(2)U34 to nm(5)s(2)U34, followed by the transfer of a methyl group from S-adenosyl-L-methionine to nm(5)s(2)U34, to form mnm(5)s(2)U34. This Ectopseudomonas mendocina (strain ymp) (Pseudomonas mendocina) protein is tRNA 5-methylaminomethyl-2-thiouridine biosynthesis bifunctional protein MnmC.